The following is a 643-amino-acid chain: Extracellular metalloproteinase 4 (643 aa).

An N-terminal signal peptide occupies residues 1-18; that stretch reads MHGLLLAGLLALPLNVLA. The propeptide occupies 19–254; sequence HPTESHSSGI…VHSVVDYVSA (236 aa). The segment covering 47-57 has biased composition (basic and acidic residues); that stretch reads TKSDAVPKQDD. Residues 47 to 71 are disordered; that stretch reads TKSDAVPKQDDESFTTSSTGDDNVS. A compositionally biased stretch (polar residues) spans 60–71; the sequence is FTTSSTGDDNVS. N-linked (GlcNAc...) asparagine glycans are attached at residues asparagine 271 and asparagine 420. Histidine 437 is a Zn(2+) binding site. Glutamate 438 is a catalytic residue. Residue histidine 441 coordinates Zn(2+). An N-linked (GlcNAc...) asparagine glycan is attached at asparagine 510.

The protein belongs to the peptidase M36 family. Zn(2+) serves as cofactor.

It is found in the secreted. Its function is as follows. Secreted metalloproteinase probably acting as a virulence factor. The sequence is that of Extracellular metalloproteinase 4 (MEP4) from Trichophyton equinum (Horse ringworm fungus).